The sequence spans 47 residues: Large ribosomal subunit protein bL34 (47 aa).

This sequence belongs to the bacterial ribosomal protein bL34 family.

This is Large ribosomal subunit protein bL34 (rpmH) from Mycolicibacterium smegmatis (strain ATCC 700084 / mc(2)155) (Mycobacterium smegmatis).